The following is a 274-amino-acid chain: Single-stranded DNA-binding protein WHY1, chloroplastic (274 aa).

The N-terminal 54 residues, 1–54, are a transit peptide targeting the chloroplast; the sequence is MSNFSLSPSPTSGFSLNLQNPTKTSYLSFSSSINTIFAPLSSNTTKSFSGLTHK. A required for ssDNA binding region spans residues 100–105; sequence KGKAAL. The Nuclear localization signal motif lies at 178–191; it reads KGRSDEGRVRKVLK. A disordered region spans residues 253 to 274; it reads PEDASRSNNANPRSGAELEWNR.

This sequence belongs to the Whirly family. As to quaternary structure, homotetramer.

It localises to the nucleus. Its subcellular location is the plastid. The protein resides in the chloroplast. In terms of biological role, single-stranded DNA-binding protein that acts as a transcriptional activator of the pathogenesis-related gene PR-10a. Upon elicitation, binds a 30bp promoter sequence known as elicitor element response (ERE) and is required for PR-10a expression. This chain is Single-stranded DNA-binding protein WHY1, chloroplastic (WHY1), found in Solanum tuberosum (Potato).